Consider the following 134-residue polypeptide: MLLVLLSVVLLALSSAQSTDNDVNYEDFTFTIPDVEDSSQRPDQGPQRPPPEGLLPRPPGDSGNQDDGPQQRPPKPGGHHRHPPPPPFQNQQRPPRRGHRQLSLPRFPSVSLQEASSFFQRDRPARHPQEQPLW.

Positions 1 to 16 (MLLVLLSVVLLALSSA) are cleaved as a signal peptide. Residues 28–134 (FTFTIPDVED…ARHPQEQPLW (107 aa)) form a disordered region. Pro residues predominate over residues 47-59 (QRPPPEGLLPRPP). Positions 110 to 119 (VSLQEASSFF) are enriched in polar residues. A compositionally biased stretch (basic and acidic residues) spans 120-134 (QRDRPARHPQEQPLW).

In terms of tissue distribution, abundantly expressed in lacrimal gland where it is found in the acinar cells but not in the intralobular ducts. Also found in the submandibular gland, the parotid and sublingual glands.

The protein resides in the secreted. This is Proline-rich protein 4 (PRR4) from Homo sapiens (Human).